Consider the following 504-residue polypeptide: D-alanine--D-alanyl carrier protein ligase (504 aa).

Residue 152-153 coordinates ATP; that stretch reads TS. Aspartate 197 serves as a coordination point for D-alanine. ATP is bound at residue 292 to 297; it reads NTYGPT. Valine 301 serves as a coordination point for D-alanine. Residues aspartate 383, 394 to 397, and lysine 492 contribute to the ATP site; that span reads YNGR. Lysine 492 contributes to the D-alanine binding site.

Belongs to the ATP-dependent AMP-binding enzyme family. DltA subfamily.

Its subcellular location is the cytoplasm. The enzyme catalyses holo-[D-alanyl-carrier protein] + D-alanine + ATP = D-alanyl-[D-alanyl-carrier protein] + AMP + diphosphate. It functions in the pathway cell wall biogenesis; lipoteichoic acid biosynthesis. Catalyzes the first step in the D-alanylation of lipoteichoic acid (LTA), the activation of D-alanine and its transfer onto the D-alanyl carrier protein (Dcp) DltC. In an ATP-dependent two-step reaction, forms a high energy D-alanyl-AMP intermediate, followed by transfer of the D-alanyl residue as a thiol ester to the phosphopantheinyl prosthetic group of the Dcp. D-alanylation of LTA plays an important role in modulating the properties of the cell wall in Gram-positive bacteria, influencing the net charge of the cell wall. In Bacillus cereus (strain B4264), this protein is D-alanine--D-alanyl carrier protein ligase.